The following is a 362-amino-acid chain: Glutamate 5-kinase (362 aa).

Residue Lys3 coordinates ATP. Residues Ser43, Asp128, and Asn140 each coordinate substrate. Residues 160–161 (TD) and 202–208 (TGGMRTK) each bind ATP. Positions 267–348 (PGTILIDAGA…REIEPILGYS (82 aa)) constitute a PUA domain.

Belongs to the glutamate 5-kinase family.

The protein localises to the cytoplasm. It carries out the reaction L-glutamate + ATP = L-glutamyl 5-phosphate + ADP. Its pathway is amino-acid biosynthesis; L-proline biosynthesis; L-glutamate 5-semialdehyde from L-glutamate: step 1/2. Its function is as follows. Catalyzes the transfer of a phosphate group to glutamate to form L-glutamate 5-phosphate. This Xanthomonas campestris pv. campestris (strain 8004) protein is Glutamate 5-kinase.